A 381-amino-acid polypeptide reads, in one-letter code: Chaperone protein DnaJ (381 aa).

Residues 3-66 (DYYETLGVER…DKRRMYDSGV (64 aa)) enclose the J domain. The segment at 129 to 211 (GGTAHVKINT…CMGHGRVRTT (83 aa)) adopts a CR-type zinc-finger fold. 8 residues coordinate Zn(2+): cysteine 142, cysteine 145, cysteine 159, cysteine 162, cysteine 185, cysteine 188, cysteine 199, and cysteine 202. CXXCXGXG motif repeat units lie at residues 142–149 (CQECGGSG), 159–166 (CPDCHGQG), 185–192 (CERCEGHG), and 199–206 (CPSCMGHG). The interval 355–381 (ATHVSQASRPQAGQKKGFFSKLKDALS) is disordered. The span at 356–365 (THVSQASRPQ) shows a compositional bias: polar residues.

This sequence belongs to the DnaJ family. As to quaternary structure, homodimer. The cofactor is Zn(2+).

The protein resides in the cytoplasm. In terms of biological role, participates actively in the response to hyperosmotic and heat shock by preventing the aggregation of stress-denatured proteins and by disaggregating proteins, also in an autonomous, DnaK-independent fashion. Unfolded proteins bind initially to DnaJ; upon interaction with the DnaJ-bound protein, DnaK hydrolyzes its bound ATP, resulting in the formation of a stable complex. GrpE releases ADP from DnaK; ATP binding to DnaK triggers the release of the substrate protein, thus completing the reaction cycle. Several rounds of ATP-dependent interactions between DnaJ, DnaK and GrpE are required for fully efficient folding. Also involved, together with DnaK and GrpE, in the DNA replication of plasmids through activation of initiation proteins. The sequence is that of Chaperone protein DnaJ from Bifidobacterium longum (strain NCC 2705).